A 229-amino-acid polypeptide reads, in one-letter code: UPF0758 protein GSU0386 (229 aa).

The MPN domain maps to arginine 107–leucine 229. Residues histidine 178, histidine 180, and aspartate 191 each coordinate Zn(2+). The JAMM motif signature appears at histidine 178–aspartate 191.

It belongs to the UPF0758 family.

In Geobacter sulfurreducens (strain ATCC 51573 / DSM 12127 / PCA), this protein is UPF0758 protein GSU0386.